The following is a 445-amino-acid chain: UDP-N-acetylmuramoylalanine--D-glutamate ligase (445 aa).

117–123 lines the ATP pocket; sequence GSNGKTT.

This sequence belongs to the MurCDEF family.

It localises to the cytoplasm. The enzyme catalyses UDP-N-acetyl-alpha-D-muramoyl-L-alanine + D-glutamate + ATP = UDP-N-acetyl-alpha-D-muramoyl-L-alanyl-D-glutamate + ADP + phosphate + H(+). It participates in cell wall biogenesis; peptidoglycan biosynthesis. In terms of biological role, cell wall formation. Catalyzes the addition of glutamate to the nucleotide precursor UDP-N-acetylmuramoyl-L-alanine (UMA). In Neisseria gonorrhoeae (strain NCCP11945), this protein is UDP-N-acetylmuramoylalanine--D-glutamate ligase.